Consider the following 454-residue polypeptide: Mannosylfructose-phosphate synthase (454 aa).

Belongs to the glycosyltransferase 1 family. The cofactor is Mg(2+). Mn(2+) is required as a cofactor.

It catalyses the reaction beta-D-fructose 6-phosphate + GDP-alpha-D-mannose = beta-D-fructofuranosyl alpha-D-mannopyranoside 6(F)-phosphate + GDP + H(+). It participates in carbohydrate metabolism; mannosylfructose biosynthesis; beta-D-fructofuranosyl alpha-D-mannopyranoside from D-fructose 6-phosphate and GDP-alpha-D-mannose: step 1/2. In Agrobacterium fabrum (strain C58 / ATCC 33970) (Agrobacterium tumefaciens (strain C58)), this protein is Mannosylfructose-phosphate synthase.